We begin with the raw amino-acid sequence, 188 residues long: Ribosome-recycling factor (188 aa).

It belongs to the RRF family.

The protein localises to the cytoplasm. Responsible for the release of ribosomes from messenger RNA at the termination of protein biosynthesis. May increase the efficiency of translation by recycling ribosomes from one round of translation to another. The chain is Ribosome-recycling factor from Blochmanniella floridana.